Here is a 353-residue protein sequence, read N- to C-terminus: Protein MGF 360-11L (353 aa).

It belongs to the asfivirus MGF 360 family. Interacts with host TBK1 ad IRF7.

Functionally, plays a role in virus cell tropism, and may be required for efficient virus replication in macrophages. In addition, inhibits the phosphorylation of host TBK1 and IRF7 and thereby negatively regulates the host cGAS signaling pathway and antagonizes IFN-mediated antiviral activity. The polypeptide is Protein MGF 360-11L (African swine fever virus (isolate Tick/South Africa/Pretoriuskop Pr4/1996) (ASFV)).